A 389-amino-acid chain; its full sequence is Alcohol dehydrogenase-like 5 (389 aa).

Residues Cys54, Thr56, His77, Cys107, Cys110, Cys113, Cys121, and Cys186 each contribute to the Zn(2+) site. 2 residues coordinate an alcohol: Thr56 and His77. Residue Thr56 participates in NAD(+) binding. NAD(+) contacts are provided by residues 211-216, Asp235, Lys240, 305-307, Phe332, and Arg382; these read GLGAVG and LGI.

The protein belongs to the zinc-containing alcohol dehydrogenase family. Class-III subfamily. In terms of assembly, homodimer. Zn(2+) serves as cofactor.

It is found in the cytoplasm. The catalysed reaction is a primary alcohol + NAD(+) = an aldehyde + NADH + H(+). The enzyme catalyses a secondary alcohol + NAD(+) = a ketone + NADH + H(+). In Arabidopsis thaliana (Mouse-ear cress), this protein is Alcohol dehydrogenase-like 5.